Here is a 121-residue protein sequence, read N- to C-terminus: uncharacterized protein (121 aa).

The N-terminal stretch at 1–19 is a signal peptide; it reads MKKFALATIFALATTSAFA.

To E.coli YgiW.

The protein resides in the periplasm. This is an uncharacterized protein from Haemophilus influenzae (strain ATCC 51907 / DSM 11121 / KW20 / Rd).